The primary structure comprises 619 residues: DNA mismatch repair protein MutL (619 aa).

The protein belongs to the DNA mismatch repair MutL/HexB family.

Functionally, this protein is involved in the repair of mismatches in DNA. It is required for dam-dependent methyl-directed DNA mismatch repair. May act as a 'molecular matchmaker', a protein that promotes the formation of a stable complex between two or more DNA-binding proteins in an ATP-dependent manner without itself being part of a final effector complex. This chain is DNA mismatch repair protein MutL, found in Myxococcus xanthus (strain DK1622).